The sequence spans 331 residues: MQRWINNIWYGSNPIKWLLVPLSGLFWLISSLRRKKFAGSPSASEALGVPVIIVGNITVGGSGKTPMVIYLIELLRRQGYRPGVISRGYGVKIDGVKLVEAQASAVDVGDEPAMIVARTQVPMAVGPDRLAAVSLLQRHYDIDVIISDDGLQHYKLTRDIELVIIDGARRFGNGYLLPAGPLREGLWRLKTIDWLINNGGKAQDNEVLMQLEPKPLLKVKSSQPGLESLDKALPVVAMAGIGNPARFFDSLSGQGYQLKHTLAFDDHQAFDAQALIALAGDLPLIMTEKDAIKCRDFAQDNWWYLPVNARLNADFDKALLARLAPLVQIKP.

Residue 58–65 (TVGGSGKT) coordinates ATP.

The protein belongs to the LpxK family.

It carries out the reaction a lipid A disaccharide + ATP = a lipid IVA + ADP + H(+). It functions in the pathway glycolipid biosynthesis; lipid IV(A) biosynthesis; lipid IV(A) from (3R)-3-hydroxytetradecanoyl-[acyl-carrier-protein] and UDP-N-acetyl-alpha-D-glucosamine: step 6/6. In terms of biological role, transfers the gamma-phosphate of ATP to the 4'-position of a tetraacyldisaccharide 1-phosphate intermediate (termed DS-1-P) to form tetraacyldisaccharide 1,4'-bis-phosphate (lipid IVA). This is Tetraacyldisaccharide 4'-kinase from Shewanella denitrificans (strain OS217 / ATCC BAA-1090 / DSM 15013).